Reading from the N-terminus, the 229-residue chain is Protein rep (229 aa).

DNA is bound at residue tyrosine 214.

It belongs to the Gram-positive plasmids replication protein type 1 family.

Produces a single-strand nick in a specific site of the plasmid, and this nick results in single-strand replication by rolling circle mechanism. This chain is Protein rep, found in Staphylococcus aureus.